Here is a 232-residue protein sequence, read N- to C-terminus: Phosphatidylserine decarboxylase proenzyme (232 aa).

Ser190 serves as the catalytic Schiff-base intermediate with substrate; via pyruvic acid. A Pyruvic acid (Ser); by autocatalysis modification is found at Ser190.

The protein belongs to the phosphatidylserine decarboxylase family. PSD-A subfamily. In terms of assembly, heterodimer of a large membrane-associated beta subunit and a small pyruvoyl-containing alpha subunit. Pyruvate serves as cofactor. In terms of processing, is synthesized initially as an inactive proenzyme. Formation of the active enzyme involves a self-maturation process in which the active site pyruvoyl group is generated from an internal serine residue via an autocatalytic post-translational modification. Two non-identical subunits are generated from the proenzyme in this reaction, and the pyruvate is formed at the N-terminus of the alpha chain, which is derived from the carboxyl end of the proenzyme. The post-translation cleavage follows an unusual pathway, termed non-hydrolytic serinolysis, in which the side chain hydroxyl group of the serine supplies its oxygen atom to form the C-terminus of the beta chain, while the remainder of the serine residue undergoes an oxidative deamination to produce ammonia and the pyruvoyl prosthetic group on the alpha chain.

Its subcellular location is the cell membrane. It catalyses the reaction a 1,2-diacyl-sn-glycero-3-phospho-L-serine + H(+) = a 1,2-diacyl-sn-glycero-3-phosphoethanolamine + CO2. It functions in the pathway phospholipid metabolism; phosphatidylethanolamine biosynthesis; phosphatidylethanolamine from CDP-diacylglycerol: step 2/2. Functionally, catalyzes the formation of phosphatidylethanolamine (PtdEtn) from phosphatidylserine (PtdSer). This chain is Phosphatidylserine decarboxylase proenzyme, found in Cereibacter sphaeroides (strain ATCC 17025 / ATH 2.4.3) (Rhodobacter sphaeroides).